Reading from the N-terminus, the 626-residue chain is UvrABC system protein C (626 aa).

A GIY-YIG domain is found at 26–105 (PEPGVYFMRD…IKQHQPHFNV (80 aa)). Residues 215 to 250 (SELINTLSLQMEQAAEDLNFEQAARLRDQIKGLQGL) form the UVR domain.

This sequence belongs to the UvrC family. In terms of assembly, interacts with UvrB in an incision complex.

It is found in the cytoplasm. In terms of biological role, the UvrABC repair system catalyzes the recognition and processing of DNA lesions. UvrC both incises the 5' and 3' sides of the lesion. The N-terminal half is responsible for the 3' incision and the C-terminal half is responsible for the 5' incision. The protein is UvrABC system protein C of Acaryochloris marina (strain MBIC 11017).